The chain runs to 282 residues: Putative phosphoenolpyruvate synthase regulatory protein (282 aa).

ADP is bound at residue 161 to 168 (GVSRSGKT).

This sequence belongs to the pyruvate, phosphate/water dikinase regulatory protein family. PSRP subfamily.

It catalyses the reaction [pyruvate, water dikinase] + ADP = [pyruvate, water dikinase]-phosphate + AMP + H(+). The enzyme catalyses [pyruvate, water dikinase]-phosphate + phosphate + H(+) = [pyruvate, water dikinase] + diphosphate. Its function is as follows. Bifunctional serine/threonine kinase and phosphorylase involved in the regulation of the phosphoenolpyruvate synthase (PEPS) by catalyzing its phosphorylation/dephosphorylation. The chain is Putative phosphoenolpyruvate synthase regulatory protein from Janthinobacterium sp. (strain Marseille) (Minibacterium massiliensis).